The sequence spans 384 residues: MDEFHRDTWVEIDLDAIYDNVANLRRFLPEGTQIMAVVKANAYGHGDAQVAATALEAGASRLAVAFLDEALALRKKGIDAPILVLGASRPEDVALAAEHRIALTVFRSDWLEKASSLYNGSTPIHFHLKMDTGMGRLGVKDEEETKRIAALIDRHPPFVLEGVYTHFATADEVNTDYFSYQYARFLHMLDWLPSRPPLVHCANSAAALRFSDRAFNMVRFGISMYGLAPSPDIKPLLPYELKEAFSLHSRLVHVKKLQPGEKVSYGATYTAQTEEWIGTIPIGYADGWLRRLQHFHVLVGGQRAPIVGRICMDQCMIRLPEPLPVGTKVTLIGRQGDEVISIDDVARHLGTINYEVPCTIGYRVPRIFFRNKRIMEVRNAVGRG.

K39 serves as the catalytic Proton acceptor; specific for D-alanine. The residue at position 39 (K39) is an N6-(pyridoxal phosphate)lysine. R136 lines the substrate pocket. Y265 (proton acceptor; specific for L-alanine) is an active-site residue. M312 provides a ligand contact to substrate.

It belongs to the alanine racemase family. Pyridoxal 5'-phosphate serves as cofactor.

It catalyses the reaction L-alanine = D-alanine. Its pathway is amino-acid biosynthesis; D-alanine biosynthesis; D-alanine from L-alanine: step 1/1. Catalyzes the interconversion of L-alanine and D-alanine. May also act on other amino acids. The protein is Alanine racemase (alr) of Geobacillus kaustophilus (strain HTA426).